We begin with the raw amino-acid sequence, 104 residues long: Large ribosomal subunit protein eL42 (104 aa).

A disordered region spans residues 22–56 (KVSQAKKSKDNPRAQGNRRYARKQRGYGGQTKPIL).

The protein belongs to the eukaryotic ribosomal protein eL42 family.

The chain is Large ribosomal subunit protein eL42 (RPL44) from Encephalitozoon cuniculi (strain GB-M1) (Microsporidian parasite).